We begin with the raw amino-acid sequence, 249 residues long: Zinc finger protein CG30 (249 aa).

The RING-type zinc finger occupies 8 to 66 (CHICCSVGEIKNYFLQPVDAITILPIVELHTCRHQLCVMCVRKIAQRGRDKRVECPMCR).

This is Zinc finger protein CG30 (CG30) from Orgyia pseudotsugata (Douglas-fir tussock moth).